Here is a 343-residue protein sequence, read N- to C-terminus: Holliday junction branch migration complex subunit RuvB (343 aa).

The large ATPase domain (RuvB-L) stretch occupies residues 1–178; it reads MNFVQQNREG…FGMILELQFY (178 aa). ATP contacts are provided by residues leucine 17, arginine 18, glycine 59, lysine 62, threonine 63, threonine 64, 125–127, arginine 168, tyrosine 178, and arginine 215; that span reads EDY. Threonine 63 contacts Mg(2+). The tract at residues 179–249 is small ATPAse domain (RuvB-S); sequence TVKELMEIIK…LVEKTMDILE (71 aa). Residues 252–343 are head domain (RuvB-H); the sequence is KLGLDEMDRK…DESLRKSDES (92 aa). DNA is bound by residues arginine 307 and arginine 312.

This sequence belongs to the RuvB family. Homohexamer. Forms an RuvA(8)-RuvB(12)-Holliday junction (HJ) complex. HJ DNA is sandwiched between 2 RuvA tetramers; dsDNA enters through RuvA and exits via RuvB. An RuvB hexamer assembles on each DNA strand where it exits the tetramer. Each RuvB hexamer is contacted by two RuvA subunits (via domain III) on 2 adjacent RuvB subunits; this complex drives branch migration. In the full resolvosome a probable DNA-RuvA(4)-RuvB(12)-RuvC(2) complex forms which resolves the HJ.

Its subcellular location is the cytoplasm. It catalyses the reaction ATP + H2O = ADP + phosphate + H(+). Functionally, the RuvA-RuvB-RuvC complex processes Holliday junction (HJ) DNA during genetic recombination and DNA repair, while the RuvA-RuvB complex plays an important role in the rescue of blocked DNA replication forks via replication fork reversal (RFR). RuvA specifically binds to HJ cruciform DNA, conferring on it an open structure. The RuvB hexamer acts as an ATP-dependent pump, pulling dsDNA into and through the RuvAB complex. RuvB forms 2 homohexamers on either side of HJ DNA bound by 1 or 2 RuvA tetramers; 4 subunits per hexamer contact DNA at a time. Coordinated motions by a converter formed by DNA-disengaged RuvB subunits stimulates ATP hydrolysis and nucleotide exchange. Immobilization of the converter enables RuvB to convert the ATP-contained energy into a lever motion, pulling 2 nucleotides of DNA out of the RuvA tetramer per ATP hydrolyzed, thus driving DNA branch migration. The RuvB motors rotate together with the DNA substrate, which together with the progressing nucleotide cycle form the mechanistic basis for DNA recombination by continuous HJ branch migration. Branch migration allows RuvC to scan DNA until it finds its consensus sequence, where it cleaves and resolves cruciform DNA. In Pseudothermotoga lettingae (strain ATCC BAA-301 / DSM 14385 / NBRC 107922 / TMO) (Thermotoga lettingae), this protein is Holliday junction branch migration complex subunit RuvB.